The sequence spans 470 residues: MAGENHQWQGSILYNMLMSAKQTRAAPEAPETRLVDQCWGCSCGDEPGVGREGLLGGRNVALLYRCCFCGKDHPRQGSILYSMLTSAKQTYAAPKAPEATLGPCWGCSCGSDPGVGRTGLPGGRPVALLYRCCFCGENHPRQGSILYSLLTSSKQTHVAPAAPEARPGGAWWDRSYFAQKPGGKEALPGGRATALLYRCCFCGEDHPQQGSTLYCMPTSTNQAQAAPEERPRAPWWDTSSGALRPVALKSPQVVCEAASAGLLKTLRFVKYLPCFQVLPLDQQLVLVRNCWASLLMLELAQDRLQFETVEVSEPSMLQKILTTRRRETGGNEPLPVPTLQPHLAPPAEARKVPSASQVQAIKCFLSKCWSLNISTKEYAYLKGTVLFNPDVPGLQCVKYIQGLQWGTQQILSEHTRMTHQGPHDRFIELNSTLFLLRFINANVIAELFFRPIIGTVSMDDMMLEMLCTKI.

Tandem repeats lie at residues M1–C67, F68–C133, and F134–C200. Residues M1–V253 are 4 X 67 AA tandem repeats. Short sequence motifs (LXXLL motif) lie at residues L13–L17, L80–L84, and L146–L150. The stretch at F201–V253 is one 4; truncated repeat. In terms of domain architecture, NR LBD spans D205 to K469. Positions M461–L466 match the AF-2 motif motif.

Belongs to the nuclear hormone receptor family. NR0 subfamily. In terms of assembly, homodimer. Interacts with NR5A1, NR5A2, NR0B2 and with COPS2. Interacts with ESRRB; represses ESRRB activity at the GATA6 promoter.

The protein resides in the nucleus. It is found in the cytoplasm. Its function is as follows. Nuclear receptor that lacks a DNA-binding domain and acts as a corepressor that inhibits the transcriptional activity of other nuclear receptors through heterodimeric interactions. Component of a cascade required for the development of the hypothalamic-pituitary-adrenal-gonadal axis. May also have a role in the development of the embryo and in the maintenance of embryonic stem cell pluripotency. In Pan troglodytes (Chimpanzee), this protein is Nuclear receptor subfamily 0 group B member 1 (NR0B1).